Reading from the N-terminus, the 610-residue chain is Estrogen receptor beta-2 (610 aa).

The segment at Met1–Phe170 is modulating. 2 consecutive NR C4-type zinc fingers follow at residues Cys171–Cys191 and Cys207–Cys231. Positions Cys171–Met236 form a DNA-binding region, nuclear receptor. Positions Ser302–Asn538 constitute an NR LBD domain. A disordered region spans residues His566–His596. The span at Ser577 to His596 shows a compositional bias: basic and acidic residues.

Belongs to the nuclear hormone receptor family. NR3 subfamily. Binds DNA as a homodimer. Can form a heterodimer with ER-alpha. In terms of tissue distribution, predominantly expressed in pituitary, telencephalon and hypothalamus as well as in the liver.

It localises to the nucleus. In terms of biological role, binds estrogens with an affinity similar to that of ER-alpha, and activates expression of reporter genes containing estrogen response elements (ERE) in an estrogen-dependent manner. This Carassius auratus (Goldfish) protein is Estrogen receptor beta-2 (esr2b).